The following is a 318-amino-acid chain: 4-hydroxy-3-methylbut-2-enyl diphosphate reductase (318 aa).

Position 12 (C12) interacts with [4Fe-4S] cluster. 2 residues coordinate (2E)-4-hydroxy-3-methylbut-2-enyl diphosphate: H41 and H74. The dimethylallyl diphosphate site is built by H41 and H74. 2 residues coordinate isopentenyl diphosphate: H41 and H74. A [4Fe-4S] cluster-binding site is contributed by C96. H124 contacts (2E)-4-hydroxy-3-methylbut-2-enyl diphosphate. H124 contributes to the dimethylallyl diphosphate binding site. An isopentenyl diphosphate-binding site is contributed by H124. The active-site Proton donor is E126. T168 contributes to the (2E)-4-hydroxy-3-methylbut-2-enyl diphosphate binding site. Position 198 (C198) interacts with [4Fe-4S] cluster. The (2E)-4-hydroxy-3-methylbut-2-enyl diphosphate site is built by S226, S227, N228, and S270. Positions 226, 227, 228, and 270 each coordinate dimethylallyl diphosphate. S226, S227, N228, and S270 together coordinate isopentenyl diphosphate.

Belongs to the IspH family. [4Fe-4S] cluster is required as a cofactor.

It carries out the reaction isopentenyl diphosphate + 2 oxidized [2Fe-2S]-[ferredoxin] + H2O = (2E)-4-hydroxy-3-methylbut-2-enyl diphosphate + 2 reduced [2Fe-2S]-[ferredoxin] + 2 H(+). The catalysed reaction is dimethylallyl diphosphate + 2 oxidized [2Fe-2S]-[ferredoxin] + H2O = (2E)-4-hydroxy-3-methylbut-2-enyl diphosphate + 2 reduced [2Fe-2S]-[ferredoxin] + 2 H(+). It functions in the pathway isoprenoid biosynthesis; dimethylallyl diphosphate biosynthesis; dimethylallyl diphosphate from (2E)-4-hydroxy-3-methylbutenyl diphosphate: step 1/1. Its pathway is isoprenoid biosynthesis; isopentenyl diphosphate biosynthesis via DXP pathway; isopentenyl diphosphate from 1-deoxy-D-xylulose 5-phosphate: step 6/6. In terms of biological role, catalyzes the conversion of 1-hydroxy-2-methyl-2-(E)-butenyl 4-diphosphate (HMBPP) into a mixture of isopentenyl diphosphate (IPP) and dimethylallyl diphosphate (DMAPP). Acts in the terminal step of the DOXP/MEP pathway for isoprenoid precursor biosynthesis. The chain is 4-hydroxy-3-methylbut-2-enyl diphosphate reductase from Psychrobacter sp. (strain PRwf-1).